The following is a 107-amino-acid chain: Large ribosomal subunit protein uL24 (107 aa).

The protein belongs to the universal ribosomal protein uL24 family. In terms of assembly, part of the 50S ribosomal subunit.

Functionally, one of two assembly initiator proteins, it binds directly to the 5'-end of the 23S rRNA, where it nucleates assembly of the 50S subunit. In terms of biological role, one of the proteins that surrounds the polypeptide exit tunnel on the outside of the subunit. This Nitratidesulfovibrio vulgaris (strain ATCC 29579 / DSM 644 / CCUG 34227 / NCIMB 8303 / VKM B-1760 / Hildenborough) (Desulfovibrio vulgaris) protein is Large ribosomal subunit protein uL24.